Reading from the N-terminus, the 203-residue chain is Endoplasmic reticulum transmembrane protein 3 (203 aa).

Topologically, residues 1–6 (MSLYYT) are lumenal. Residues 7-27 (LVFAILVVEIFMFSILALPIP) form a helical membrane-spanning segment. Over 28-45 (SRYRRPLTLLLLKPFKSS) the chain is Cytoplasmic. A helical transmembrane segment spans residues 46–66 (TVQVAIKCVLGFILLLFIDCI). Residues 67-110 (NRVYSIDKELQLSSASQNNGAIIAQDRIEVLSRKFFAQRNMYLT) are Lumenal-facing. Residues 111–131 (GITLFLTFVVVRTFGLVIELL) form a helical membrane-spanning segment. Residues 132-203 (TMKDIYRASP…KSESLQEEIN (72 aa)) lie on the Cytoplasmic side of the membrane. Residues 142–171 (PVASSDVKKNDSVTAEAAAQSGASKDDHGD) are disordered.

It belongs to the BCAP29/BCAP31 family.

The protein localises to the endoplasmic reticulum membrane. In terms of biological role, may play a role in anterograde transport of membrane proteins from the endoplasmic reticulum to the Golgi. May be involved in invertase secretion. The polypeptide is Endoplasmic reticulum transmembrane protein 3 (YET3) (Saccharomyces cerevisiae (strain ATCC 204508 / S288c) (Baker's yeast)).